The following is a 187-amino-acid chain: MIEYIRGIIEDIGPDHVIIDLMGIGIKIFVPFSTMKELPPKGNITKLYTYLYVREDGFQIFGFKRKEELELFEKLLSVSGVGPKGALSILSVVPIESFIKAVNSGDYKILTAAPGIGKKTAERIILELKDKVPKEVVVPKEDSLLNEALEALLALGYTKSEAIYALSDVNCESVEQAVKEALKKLAK.

The domain I stretch occupies residues 1-64 (MIEYIRGIIE…EDGFQIFGFK (64 aa)). The interval 65–136 (RKEELELFEK…ELKDKVPKEV (72 aa)) is domain II. The interval 136 to 139 (VVVP) is flexible linker. The domain III stretch occupies residues 140 to 187 (KEDSLLNEALEALLALGYTKSEAIYALSDVNCESVEQAVKEALKKLAK).

The protein belongs to the RuvA family. In terms of assembly, homotetramer. Forms an RuvA(8)-RuvB(12)-Holliday junction (HJ) complex. HJ DNA is sandwiched between 2 RuvA tetramers; dsDNA enters through RuvA and exits via RuvB. An RuvB hexamer assembles on each DNA strand where it exits the tetramer. Each RuvB hexamer is contacted by two RuvA subunits (via domain III) on 2 adjacent RuvB subunits; this complex drives branch migration. In the full resolvosome a probable DNA-RuvA(4)-RuvB(12)-RuvC(2) complex forms which resolves the HJ.

Its subcellular location is the cytoplasm. The RuvA-RuvB-RuvC complex processes Holliday junction (HJ) DNA during genetic recombination and DNA repair, while the RuvA-RuvB complex plays an important role in the rescue of blocked DNA replication forks via replication fork reversal (RFR). RuvA specifically binds to HJ cruciform DNA, conferring on it an open structure. The RuvB hexamer acts as an ATP-dependent pump, pulling dsDNA into and through the RuvAB complex. HJ branch migration allows RuvC to scan DNA until it finds its consensus sequence, where it cleaves and resolves the cruciform DNA. This chain is Holliday junction branch migration complex subunit RuvA, found in Caldanaerobacter subterraneus subsp. tengcongensis (strain DSM 15242 / JCM 11007 / NBRC 100824 / MB4) (Thermoanaerobacter tengcongensis).